We begin with the raw amino-acid sequence, 241 residues long: ATP synthase subunit a (241 aa).

7 helical membrane passes run 27-47 (NCSL…CWAL), 52-72 (VVPG…ANTL), 87-107 (VMTT…PFGF), 112-132 (HLSV…VIGF), 142-162 (IFLP…IKLF), 175-195 (LAAN…FVLK), and 198-218 (LVLA…EIFV).

It belongs to the ATPase A chain family. In terms of assembly, F-type ATPases have 2 components, CF(1) - the catalytic core - and CF(0) - the membrane proton channel. CF(1) has five subunits: alpha(3), beta(3), gamma(1), delta(1), epsilon(1). CF(0) has three main subunits: a(1), b(2) and c(9-12). The alpha and beta chains form an alternating ring which encloses part of the gamma chain. CF(1) is attached to CF(0) by a central stalk formed by the gamma and epsilon chains, while a peripheral stalk is formed by the delta and b chains.

It is found in the cell inner membrane. Functionally, key component of the proton channel; it plays a direct role in the translocation of protons across the membrane. This is ATP synthase subunit a from Anaplasma marginale (strain St. Maries).